Here is a 282-residue protein sequence, read N- to C-terminus: Elongation factor Ts (282 aa).

Residues 80–83 (TDFV) form an involved in Mg(2+) ion dislocation from EF-Tu region.

This sequence belongs to the EF-Ts family.

The protein resides in the cytoplasm. Functionally, associates with the EF-Tu.GDP complex and induces the exchange of GDP to GTP. It remains bound to the aminoacyl-tRNA.EF-Tu.GTP complex up to the GTP hydrolysis stage on the ribosome. The polypeptide is Elongation factor Ts (tsf) (Chlamydia trachomatis serovar D (strain ATCC VR-885 / DSM 19411 / UW-3/Cx)).